A 187-amino-acid chain; its full sequence is Ribulose bisphosphate carboxylase small subunit, chloroplastic (187 aa).

The transit peptide at 1–56 (MASSVMSTATVATGANAAQASMIASFNGLKSAASFPVTRKQDLDITSIASNGGRVE) directs the protein to the chloroplast.

This sequence belongs to the RuBisCO small chain family. Heterohexadecamer of 8 large and 8 small subunits.

Its subcellular location is the plastid. It is found in the chloroplast. Functionally, ruBisCO catalyzes two reactions: the carboxylation of D-ribulose 1,5-bisphosphate, the primary event in carbon dioxide fixation, as well as the oxidative fragmentation of the pentose substrate. Both reactions occur simultaneously and in competition at the same active site. Although the small subunit is not catalytic it is essential for maximal activity. The protein is Ribulose bisphosphate carboxylase small subunit, chloroplastic of Capsicum annuum (Capsicum pepper).